Consider the following 371-residue polypeptide: uncharacterized protein (371 aa).

A helical transmembrane segment spans residues 17 to 33 (FLLFSVVLIIVMTTLVF).

The protein to S.pombe SpBC4C3.08 and SpBC4C3.09.

It is found in the membrane. This is an uncharacterized protein from Schizosaccharomyces pombe (strain 972 / ATCC 24843) (Fission yeast).